We begin with the raw amino-acid sequence, 58 residues long: Large ribosomal subunit protein uL30 (58 aa).

This sequence belongs to the universal ribosomal protein uL30 family. Part of the 50S ribosomal subunit.

The sequence is that of Large ribosomal subunit protein uL30 from Vibrio vulnificus (strain CMCP6).